A 251-amino-acid chain; its full sequence is MRRPLVAGNWKMHGTHSSVADLIKGLRQLALPSGVDVAVMPPCLFISQVVQGLAGKAIGVGAQNSAVEPMQGALTGEIAPSQLADAGCGMVLVGHSERRLILGESDEVVSRKFAAAQSCGLVPVLCVGETRAEREAGKTLEVVARQLGSVIDELGVGAFARAVVAYEPVWAIGTGLTASPAQAQEVHAAIRAQLAAENAEVAKGVRLLYGGSVKAASAAELFGMPDIDGGLVGGASLNADEFGAICRAAGS.

Position 9–11 (N9–K11) interacts with substrate. H95 (electrophile) is an active-site residue. E167 serves as the catalytic Proton acceptor. Substrate is bound by residues G173, S212, and G233–G234.

Belongs to the triosephosphate isomerase family. Homodimer.

The protein resides in the cytoplasm. The catalysed reaction is D-glyceraldehyde 3-phosphate = dihydroxyacetone phosphate. It participates in carbohydrate biosynthesis; gluconeogenesis. The protein operates within carbohydrate degradation; glycolysis; D-glyceraldehyde 3-phosphate from glycerone phosphate: step 1/1. In terms of biological role, involved in the gluconeogenesis. Catalyzes stereospecifically the conversion of dihydroxyacetone phosphate (DHAP) to D-glyceraldehyde-3-phosphate (G3P). The protein is Triosephosphate isomerase of Pseudomonas paraeruginosa (strain DSM 24068 / PA7) (Pseudomonas aeruginosa (strain PA7)).